We begin with the raw amino-acid sequence, 299 residues long: Protein bem46 (299 aa).

Residues 15-32 form a helical membrane-spanning segment; the sequence is YSGMASLAVTLIALGFLY.

Belongs to the serine esterase family.

It is found in the membrane. Its function is as follows. Suppressor of bem1/bud5. This chain is Protein bem46 (bem46), found in Schizosaccharomyces pombe (strain 972 / ATCC 24843) (Fission yeast).